Reading from the N-terminus, the 80-residue chain is Cell division activator CedA (80 aa).

This sequence belongs to the CedA family.

Activates the cell division inhibited by chromosomal DNA over-replication. The polypeptide is Cell division activator CedA (Escherichia coli (strain SMS-3-5 / SECEC)).